A 335-amino-acid chain; its full sequence is UPF0353 protein MAP_3435c (335 aa).

The next 2 membrane-spanning stretches (helical) occupy residues W18–F38 and V67–T87. One can recognise a VWFA domain in the interval V98–L294. Residues M309–L329 form a helical membrane-spanning segment.

This sequence belongs to the UPF0353 family.

Its subcellular location is the cell membrane. This Mycolicibacterium paratuberculosis (strain ATCC BAA-968 / K-10) (Mycobacterium paratuberculosis) protein is UPF0353 protein MAP_3435c.